Reading from the N-terminus, the 80-residue chain is Exodeoxyribonuclease 7 small subunit (80 aa).

Belongs to the XseB family. Heterooligomer composed of large and small subunits.

Its subcellular location is the cytoplasm. It catalyses the reaction Exonucleolytic cleavage in either 5'- to 3'- or 3'- to 5'-direction to yield nucleoside 5'-phosphates.. Functionally, bidirectionally degrades single-stranded DNA into large acid-insoluble oligonucleotides, which are then degraded further into small acid-soluble oligonucleotides. The polypeptide is Exodeoxyribonuclease 7 small subunit (Rickettsia typhi (strain ATCC VR-144 / Wilmington)).